Reading from the N-terminus, the 171-residue chain is uncharacterized protein (171 aa).

This is an uncharacterized protein from Mycoplasma genitalium (strain ATCC 33530 / DSM 19775 / NCTC 10195 / G37) (Mycoplasmoides genitalium).